The sequence spans 462 residues: L-seryl-tRNA(Sec) selenium transferase (462 aa).

Lys293 carries the post-translational modification N6-(pyridoxal phosphate)lysine.

The protein belongs to the SelA family. The cofactor is pyridoxal 5'-phosphate.

It is found in the cytoplasm. It catalyses the reaction L-seryl-tRNA(Sec) + selenophosphate + H(+) = L-selenocysteinyl-tRNA(Sec) + phosphate. The protein operates within aminoacyl-tRNA biosynthesis; selenocysteinyl-tRNA(Sec) biosynthesis; selenocysteinyl-tRNA(Sec) from L-seryl-tRNA(Sec) (bacterial route): step 1/1. Converts seryl-tRNA(Sec) to selenocysteinyl-tRNA(Sec) required for selenoprotein biosynthesis. The sequence is that of L-seryl-tRNA(Sec) selenium transferase from Clostridium botulinum (strain Loch Maree / Type A3).